The following is a 219-amino-acid chain: Cytidylate kinase (219 aa).

10 to 18 (GPAAAGKST) contacts ATP.

Belongs to the cytidylate kinase family. Type 1 subfamily.

It is found in the cytoplasm. It catalyses the reaction CMP + ATP = CDP + ADP. It carries out the reaction dCMP + ATP = dCDP + ADP. This is Cytidylate kinase from Staphylococcus saprophyticus subsp. saprophyticus (strain ATCC 15305 / DSM 20229 / NCIMB 8711 / NCTC 7292 / S-41).